A 384-amino-acid chain; its full sequence is MAP kinase-activated protein kinase 3 (384 aa).

M1 carries the post-translational modification N-acetylmethionine. The disordered stretch occupies residues 1–22 (MDVETAEEQGGPAPPSGVPCGP). The Protein kinase domain maps to 46–306 (QLSKQVLGLG…ITQFMNHPWI (261 aa)). ATP-binding positions include 52–60 (LGLGVNGKV) and K75. D168 functions as the Proton acceptor in the catalytic mechanism. T203 carries the post-translational modification Phosphothreonine; by MAPK14. S253 is subject to Phosphoserine; by MAPK14. Phosphoserine; by autocatalysis is present on S309. The segment at 309–345 (SMVVPQTPLHTARVLQEDRDHWDEVKEEMTSALATMR) is autoinhibitory helix. A Phosphothreonine; by MAPK14 modification is found at T315. The Nuclear export signal (NES) motif lies at 337–346 (MTSALATMRV). The tract at residues 347–371 (DYDQVKIKDLKTSNNRLLNKRRKKQ) is p38 MAPK-binding site. 2 consecutive short sequence motifs (bipartite nuclear localization signal) follow at residues 352-355 (KIKD) and 366-370 (KRRKK). The interval 359–384 (SNNRLLNKRRKKQAGSSSGSQGCNNQ) is disordered. Residues 373-384 (GSSSGSQGCNNQ) are compositionally biased toward low complexity.

It belongs to the protein kinase superfamily. CAMK Ser/Thr protein kinase family. In terms of assembly, heterodimer with p38-alpha/MAPK14. The heterodimer with p38-alpha/MAPK14 forms a stable complex: molecules are positioned 'face to face' so that the ATP-binding sites of both kinases are at the heterodimer interface. Interacts with TCF3 and with polycomb proteins, such as PCH2 and BMI1/PCGF4. Post-translationally, phosphorylated and activated by MAPK1/ERK2 and MAPK3/ERK1. Phosphorylated and activated by MAP kinase p38-alpha/MAPK14 at Thr-203, Ser-253 and Thr-315.

The protein localises to the nucleus. Its subcellular location is the cytoplasm. It catalyses the reaction L-seryl-[protein] + ATP = O-phospho-L-seryl-[protein] + ADP + H(+). The enzyme catalyses L-threonyl-[protein] + ATP = O-phospho-L-threonyl-[protein] + ADP + H(+). Activated following phosphorylation by p38-alpha/MAPK14 following various stresses. Inhibited by ligand 5B (2'-[2-(1,3-benzodioxol-5-yl)pyrimidin-4-yl]-5',6'-dihydrospiro[piperidine-4,7'-pyrrolo[3,2-c]pyridin]- 4'(1'h)-one) and ligand P4O (2-[2-(2-fluorophenyl)pyridin-4-yl]-1,5,6,7-tetrahydro- 4h-pyrrolo[3,2-c]pyridin-4-one), 2 ATP-competitive inhibitors. Stress-activated serine/threonine-protein kinase involved in cytokines production, endocytosis, cell migration, chromatin remodeling and transcriptional regulation. Following stress, it is phosphorylated and activated by MAP kinase p38-alpha/MAPK14, leading to phosphorylation of substrates. Phosphorylates serine in the peptide sequence, Hyd-X-R-X(2)-S, where Hyd is a large hydrophobic residue. MAPKAPK2 and MAPKAPK3, share the same function and substrate specificity, but MAPKAPK3 kinase activity and level in protein expression are lower compared to MAPKAPK2. Phosphorylates HSP27/HSPB1, KRT18, KRT20, RCSD1, RPS6KA3, TAB3 and TTP/ZFP36. Mediates phosphorylation of HSP27/HSPB1 in response to stress, leading to dissociate HSP27/HSPB1 from large small heat-shock protein (sHsps) oligomers and impair their chaperone activities and ability to protect against oxidative stress effectively. Involved in inflammatory response by regulating tumor necrosis factor (TNF) and IL6 production post-transcriptionally: acts by phosphorylating AU-rich elements (AREs)-binding proteins, such as TTP/ZFP36, leading to regulate the stability and translation of TNF and IL6 mRNAs. Phosphorylation of TTP/ZFP36, a major post-transcriptional regulator of TNF, promotes its binding to 14-3-3 proteins and reduces its ARE mRNA affinity leading to inhibition of dependent degradation of ARE-containing transcript. Involved in toll-like receptor signaling pathway (TLR) in dendritic cells: required for acute TLR-induced macropinocytosis by phosphorylating and activating RPS6KA3. Also acts as a modulator of Polycomb-mediated repression. The polypeptide is MAP kinase-activated protein kinase 3 (MAPKAPK3) (Bos taurus (Bovine)).